A 706-amino-acid chain; its full sequence is Elongation factor G (706 aa).

One can recognise a tr-type G domain in the interval 8–295 (ELYRNFGIMA…AVIDYLPSPL (288 aa)). Residues 17 to 24 (AHIDAGKT), 92 to 96 (DTPGH), and 146 to 149 (NKMD) each bind GTP.

It belongs to the TRAFAC class translation factor GTPase superfamily. Classic translation factor GTPase family. EF-G/EF-2 subfamily.

The protein resides in the cytoplasm. Catalyzes the GTP-dependent ribosomal translocation step during translation elongation. During this step, the ribosome changes from the pre-translocational (PRE) to the post-translocational (POST) state as the newly formed A-site-bound peptidyl-tRNA and P-site-bound deacylated tRNA move to the P and E sites, respectively. Catalyzes the coordinated movement of the two tRNA molecules, the mRNA and conformational changes in the ribosome. This is Elongation factor G from Ruegeria sp. (strain TM1040) (Silicibacter sp.).